The following is a 512-amino-acid chain: Kynurenine 3-monooxygenase (512 aa).

This sequence belongs to the aromatic-ring hydroxylase family. KMO subfamily. FAD is required as a cofactor.

The protein localises to the mitochondrion outer membrane. It catalyses the reaction L-kynurenine + NADPH + O2 + H(+) = 3-hydroxy-L-kynurenine + NADP(+) + H2O. It functions in the pathway cofactor biosynthesis; NAD(+) biosynthesis; quinolinate from L-kynurenine: step 1/3. In terms of biological role, catalyzes the hydroxylation of L-kynurenine (L-Kyn) to form 3-hydroxy-L-kynurenine (L-3OHKyn). Required for synthesis of quinolinic acid. The chain is Kynurenine 3-monooxygenase (bna4) from Neosartorya fischeri (strain ATCC 1020 / DSM 3700 / CBS 544.65 / FGSC A1164 / JCM 1740 / NRRL 181 / WB 181) (Aspergillus fischerianus).